The following is an 82-amino-acid chain: Small ribosomal subunit protein bS18 (82 aa).

The tract at residues 1–20 (MVDINQIPTRRPFHRRRKTC) is disordered.

This sequence belongs to the bacterial ribosomal protein bS18 family. Part of the 30S ribosomal subunit. Forms a tight heterodimer with protein bS6.

In terms of biological role, binds as a heterodimer with protein bS6 to the central domain of the 16S rRNA, where it helps stabilize the platform of the 30S subunit. The sequence is that of Small ribosomal subunit protein bS18 from Brucella abortus (strain 2308).